The following is a 154-amino-acid chain: AP-1 complex subunit sigma-2 (154 aa).

This sequence belongs to the adaptor complexes small subunit family. As to quaternary structure, adaptor protein complex 1 (AP-1) is a heterotetramer composed of two large adaptins (gamma-type subunit and beta-type subunit), a medium adaptin (mu-type subunit) and a small adaptin (sigma-type subunit).

The protein resides in the golgi apparatus. It localises to the trans-Golgi network. Its subcellular location is the cytoplasmic vesicle. It is found in the clathrin-coated vesicle membrane. In terms of biological role, subunit of clathrin-associated adaptor protein complex 1 that plays a role in protein sorting in the trans-Golgi network (TGN) and endosomes. The AP complexes mediate the recruitment of clathrin to membranes and the recognition of sorting signals within the cytosolic tails of transmembrane cargo molecules. Also involved in early steps of phagocytosis and macropinocytosis. The protein is AP-1 complex subunit sigma-2 (ap1s2) of Dictyostelium discoideum (Social amoeba).